A 322-amino-acid polypeptide reads, in one-letter code: Myeloid-associated differentiation marker (322 aa).

Residues 1-25 (MPVTVTRTTITTTTTSSSGQGSPTI) form a disordered region. Position 22 is a phosphoserine (S22). 2 consecutive MARVEL domains span residues 31-163 (ALTQ…ARPG) and 168-319 (YMAT…HLVF). The next 8 helical transmembrane spans lie at 41-61 (LLQL…GAWT), 70-90 (FTWC…LCGL), 101-121 (FPIT…IIYP), 137-157 (AIAA…EVAW), 171-191 (TVPG…FAFI), 203-223 (LEWC…AILL), 239-259 (FLSG…VLWP), and 294-314 (LAVA…LVHS).

It belongs to the MAL family.

The protein resides in the membrane. The protein is Myeloid-associated differentiation marker (MYADM) of Pongo abelii (Sumatran orangutan).